The following is a 33-amino-acid chain: Photosystem II reaction center protein Psb30 (33 aa).

The chain crosses the membrane as a helical span at residues 5-25 (VIAQLTMLTIAVITGPLVIFF).

Belongs to the Psb30/Ycf12 family. As to quaternary structure, PSII is composed of 1 copy each of membrane proteins PsbA, PsbB, PsbC, PsbD, PsbE, PsbF, PsbH, PsbI, PsbJ, PsbK, PsbL, PsbM, PsbT, PsbX, PsbY, PsbZ, Psb30/Ycf12, peripheral proteins of the oxygen-evolving complex and a large number of cofactors. It forms dimeric complexes.

Its subcellular location is the plastid. It localises to the chloroplast thylakoid membrane. Functionally, a core subunit of photosystem II (PSII), probably helps stabilize the reaction center. This is Photosystem II reaction center protein Psb30 from Welwitschia mirabilis (Tree tumbo).